The following is a 299-amino-acid chain: Ribonuclease 3-like protein 3 (299 aa).

Residues 39–183 enclose the RNase III domain; it reads VAAVESLLGY…LIGAIYCDSN (145 aa). Residues Glu-79, Asp-169, and Glu-172 each coordinate Mg(2+). The 65-residue stretch at 209–273 folds into the DRBM domain; the sequence is HPVSELFEFC…AKAALDKLKE (65 aa). Residues 274-299 form a disordered region; it reads TLGQSQTEPMSAEVSEQFNKIDLTGS. The span at 275 to 291 shows a compositional bias: polar residues; sequence LGQSQTEPMSAEVSEQF.

Requires Mg(2+) as cofactor. Mn(2+) is required as a cofactor.

Cleaves double-stranded RNA (dsRNA). The sequence is that of Ribonuclease 3-like protein 3 from Oryza sativa subsp. japonica (Rice).